Consider the following 50-residue polypeptide: Large ribosomal subunit protein eL39 (50 aa).

The span at 1 to 12 (MGKKSKAKKKRL) shows a compositional bias: basic residues. Residues 1-21 (MGKKSKAKKKRLGKLEKQNSR) are disordered.

It belongs to the eukaryotic ribosomal protein eL39 family.

The chain is Large ribosomal subunit protein eL39 from Haloquadratum walsbyi (strain DSM 16790 / HBSQ001).